The sequence spans 232 residues: Succinyl-CoA:3-ketoacid coenzyme A transferase subunit A (232 aa).

Residue 24–30 participates in CoA binding; that stretch reads GGFGLCG.

Belongs to the 3-oxoacid CoA-transferase subunit A family. Heterodimer of a subunit A and a subunit B.

The catalysed reaction is a 3-oxo acid + succinyl-CoA = a 3-oxoacyl-CoA + succinate. The sequence is that of Succinyl-CoA:3-ketoacid coenzyme A transferase subunit A (scoA) from Helicobacter pylori (strain ATCC 700392 / 26695) (Campylobacter pylori).